A 109-amino-acid chain; its full sequence is Lipoprotein BsmA (109 aa).

Residues 1 to 24 (MVSRKRNSVIYRFASLLLVLMLSA) form the signal peptide. Residue Cys25 is the site of N-palmitoyl cysteine attachment. The S-diacylglycerol cysteine moiety is linked to residue Cys25.

Belongs to the BhsA/McbA family.

Its subcellular location is the cell membrane. Functionally, involved in protection of biofilms against oxidative stress. The protein is Lipoprotein BsmA (bsmA) of Escherichia coli (strain K12).